Consider the following 127-residue polypeptide: Glycine cleavage system H protein (127 aa).

In terms of domain architecture, Lipoyl-binding spans 24-106; sequence TATIGITDYA…YAEGWMLKLK (83 aa). Position 65 is an N6-lipoyllysine (lysine 65).

The protein belongs to the GcvH family. In terms of assembly, the glycine cleavage system is composed of four proteins: P, T, L and H. (R)-lipoate serves as cofactor.

In terms of biological role, the glycine cleavage system catalyzes the degradation of glycine. The H protein shuttles the methylamine group of glycine from the P protein to the T protein. This is Glycine cleavage system H protein from Opitutus terrae (strain DSM 11246 / JCM 15787 / PB90-1).